A 204-amino-acid polypeptide reads, in one-letter code: Urease accessory protein UreG (204 aa).

12-19 (GPVGSGKT) is a binding site for GTP.

The protein belongs to the SIMIBI class G3E GTPase family. UreG subfamily. Homodimer. UreD, UreF and UreG form a complex that acts as a GTP-hydrolysis-dependent molecular chaperone, activating the urease apoprotein by helping to assemble the nickel containing metallocenter of UreC. The UreE protein probably delivers the nickel.

The protein resides in the cytoplasm. Facilitates the functional incorporation of the urease nickel metallocenter. This process requires GTP hydrolysis, probably effectuated by UreG. The sequence is that of Urease accessory protein UreG from Pseudomonas fluorescens (strain Pf0-1).